A 1320-amino-acid polypeptide reads, in one-letter code: Collagen alpha-1(XX) chain (1320 aa).

An N-terminal signal peptide occupies residues 1 to 25 (MSLQGSYQHFCLWMFLGTTLALGQG). Residues 27–118 (VSSRLRLAVL…EFVIEDLKSQ (92 aa)) form the Fibronectin type-III 1 domain. A VWFA domain is found at 177–352 (DIIFLVDGSW…DTLAPLLSRL (176 aa)). Fibronectin type-III domains follow at residues 377 to 466 (TPTR…APLP), 467 to 556 (PPGP…SALG), 557 to 644 (PPRH…TQKA), 646 to 735 (SPGQ…TPSA), and 740 to 831 (PPSS…ACPA). N433 carries an N-linked (GlcNAc...) asparagine glycan. N-linked (GlcNAc...) asparagine glycans are attached at residues N569 and N604. The segment at 728–752 (SLRYTPSAASRSPPSSLALSSETPN) is disordered. The span at 733 to 748 (PSAASRSPPSSLALSS) shows a compositional bias: low complexity. The N-linked (GlcNAc...) asparagine glycan is linked to N771. The region spanning 840 to 1035 (GFDLMVAFGL…LQMLQIVCSD (196 aa)) is the Laminin G-like domain. 2 disordered regions span residues 1064 to 1220 (YSSE…EKGE) and 1291 to 1320 (LRPE…ESLE). Positions 1069-1080 (PGPPGPQGPPGL) are enriched in pro residues. Collagen-like domains lie at 1069 to 1122 (PGPP…TQGR), 1125 to 1174 (QGPM…GPAG), and 1165 to 1221 (GMRG…KGEP). The span at 1081-1093 (PGRNGPPGQQGHP) shows a compositional bias: low complexity. Gly residues predominate over residues 1106–1115 (GPEGPGGQQG). A compositionally biased stretch (low complexity) spans 1140 to 1152 (QGLSGLQGLSGQQ). Positions 1302 to 1320 (ISHTSNPRLQEVQTPESLE) are enriched in polar residues.

It localises to the secreted. Its subcellular location is the extracellular space. Functionally, probable collagen protein. The protein is Collagen alpha-1(XX) chain (Col20a1) of Mus musculus (Mouse).